Reading from the N-terminus, the 670-residue chain is UvrABC system protein B (670 aa).

Positions glutamate 26–arginine 414 constitute a Helicase ATP-binding domain. Glycine 39–threonine 46 provides a ligand contact to ATP. Positions tyrosine 92–valine 115 match the Beta-hairpin motif. In terms of domain architecture, Helicase C-terminal spans glutamine 431 to leucine 597. A UVR domain is found at glutamate 630–glutamine 665.

This sequence belongs to the UvrB family. As to quaternary structure, forms a heterotetramer with UvrA during the search for lesions. Interacts with UvrC in an incision complex.

It localises to the cytoplasm. Functionally, the UvrABC repair system catalyzes the recognition and processing of DNA lesions. A damage recognition complex composed of 2 UvrA and 2 UvrB subunits scans DNA for abnormalities. Upon binding of the UvrA(2)B(2) complex to a putative damaged site, the DNA wraps around one UvrB monomer. DNA wrap is dependent on ATP binding by UvrB and probably causes local melting of the DNA helix, facilitating insertion of UvrB beta-hairpin between the DNA strands. Then UvrB probes one DNA strand for the presence of a lesion. If a lesion is found the UvrA subunits dissociate and the UvrB-DNA preincision complex is formed. This complex is subsequently bound by UvrC and the second UvrB is released. If no lesion is found, the DNA wraps around the other UvrB subunit that will check the other stand for damage. The polypeptide is UvrABC system protein B (Pectobacterium atrosepticum (strain SCRI 1043 / ATCC BAA-672) (Erwinia carotovora subsp. atroseptica)).